A 465-amino-acid polypeptide reads, in one-letter code: ATP-dependent rRNA helicase rrp3 (465 aa).

Residues methionine 1–glutamate 22 show a composition bias toward basic and acidic residues. A disordered region spans residues methionine 1–alanine 44. The span at threonine 23–asparagine 36 shows a compositional bias: low complexity. The short motif at lysine 46–glutamine 74 is the Q motif element. The 172-residue stretch at isoleucine 77 to valine 248 folds into the Helicase ATP-binding domain. Alanine 90–threonine 97 is an ATP binding site. The DEAD box signature appears at aspartate 196–aspartate 199. The Helicase C-terminal domain occupies tyrosine 275–phenylalanine 419. A compositionally biased stretch (basic residues) spans arginine 442–arginine 453. A disordered region spans residues arginine 442 to tyrosine 465. Positions lysine 454–tyrosine 465 are enriched in basic and acidic residues.

It belongs to the DEAD box helicase family. DDX47/RRP3 subfamily. As to quaternary structure, interacts with the SSU processome.

Its subcellular location is the nucleus. The enzyme catalyses ATP + H2O = ADP + phosphate + H(+). Its function is as follows. ATP-dependent rRNA helicase required for pre-ribosomal RNA processing. Involved in the maturation of the 35S-pre-rRNA and to its cleavage to mature 18S rRNA. The protein is ATP-dependent rRNA helicase rrp3 of Schizosaccharomyces pombe (strain 972 / ATCC 24843) (Fission yeast).